The chain runs to 208 residues: Ras-related protein M-Ras (208 aa).

D21, G22, G23, V24, G25, K26, S27, A28, F38, V39, P40, Y42, P44, and T45 together coordinate GTP. Residue S27 participates in Mg(2+) binding. The Effector region signature appears at Y42 to Y50. Mg(2+) contacts are provided by T45 and D67. Residues G70, N126, K127, D129, S156, A157, and K158 each contribute to the GTP site. A Cysteine methyl ester modification is found at C205. Residue C205 is the site of S-geranylgeranyl cysteine attachment. Residues V206–L208 constitute a propeptide, removed in mature form.

This sequence belongs to the small GTPase superfamily. Ras family. As to quaternary structure, component of the SHOC2-MRAS-PP1c (SMP) holophosphatase complex consisting of SHOC2, GTP-bound M-Ras/MRAS and the catalytic subunit of protein phosphatase 1 (either PPP1CA, PPP1CB or PPP1CC). Interacts (active GTP-bound form) with both SHOC2 and PP1c (all isoforms) to form a tertiary complex; SHOC2 and PP1c preferably bind M-Ras/MRAS, but they also bind K-Ras/KRAS, N-Ras/NRAS and H-Ras/HRAS. Interacts with RGL3. Interacts (active GTP-bound form preferentially) with RGS14. Requires Mg(2+) as cofactor. Expression highly restricted to the brain and heart.

The protein localises to the cell membrane. The enzyme catalyses GTP + H2O = GDP + phosphate + H(+). In terms of biological role, signal transducer in the Ras-MAPK signaling pathway that regulates cell proliferation and survival. Core component of the SHOC2-MRAS-PP1c (SMP) holophosphatase complex that regulates the MAPK pathway activation. The formation of the SMP complex only occurs when MRAS is GTP-bound. MRAS has low intrinsic GTPase activity and may require additional factors for activation. The SMP complex specifically dephosphorylates the inhibitory phosphorylation at 'Ser-259' of RAF1 kinase, 'Ser-365' of BRAF kinase and 'Ser-214' of ARAF kinase, stimulating their kinase activities. This chain is Ras-related protein M-Ras (MRAS), found in Homo sapiens (Human).